A 226-amino-acid polypeptide reads, in one-letter code: UPF0173 metal-dependent hydrolase CHY_0920 (226 aa).

Belongs to the UPF0173 family.

The chain is UPF0173 metal-dependent hydrolase CHY_0920 from Carboxydothermus hydrogenoformans (strain ATCC BAA-161 / DSM 6008 / Z-2901).